The following is a 391-amino-acid chain: 4-hydroxy-3-methylbut-2-en-1-yl diphosphate synthase (flavodoxin) (391 aa).

Residues C281, C284, C316, and E323 each coordinate [4Fe-4S] cluster. Residues 372–391 (EMGGEDGQGGIKGSPVVSVS) are disordered.

This sequence belongs to the IspG family. [4Fe-4S] cluster is required as a cofactor.

It carries out the reaction (2E)-4-hydroxy-3-methylbut-2-enyl diphosphate + oxidized [flavodoxin] + H2O + 2 H(+) = 2-C-methyl-D-erythritol 2,4-cyclic diphosphate + reduced [flavodoxin]. Its pathway is isoprenoid biosynthesis; isopentenyl diphosphate biosynthesis via DXP pathway; isopentenyl diphosphate from 1-deoxy-D-xylulose 5-phosphate: step 5/6. In terms of biological role, converts 2C-methyl-D-erythritol 2,4-cyclodiphosphate (ME-2,4cPP) into 1-hydroxy-2-methyl-2-(E)-butenyl 4-diphosphate. The polypeptide is 4-hydroxy-3-methylbut-2-en-1-yl diphosphate synthase (flavodoxin) (Renibacterium salmoninarum (strain ATCC 33209 / DSM 20767 / JCM 11484 / NBRC 15589 / NCIMB 2235)).